Consider the following 341-residue polypeptide: Glyceraldehyde-3-phosphate dehydrogenase 2 (341 aa).

NAD(+) is bound by residues 13–14, aspartate 35, and lysine 85; that span reads RI. Residues 157–159, threonine 188, 217–218, and arginine 240 contribute to the D-glyceraldehyde 3-phosphate site; these read SCT and TG. Residue cysteine 158 is the Nucleophile of the active site. Position 322 (asparagine 322) interacts with NAD(+).

The protein belongs to the glyceraldehyde-3-phosphate dehydrogenase family. As to quaternary structure, homotetramer.

The protein resides in the cytoplasm. It catalyses the reaction D-glyceraldehyde 3-phosphate + phosphate + NAD(+) = (2R)-3-phospho-glyceroyl phosphate + NADH + H(+). It participates in carbohydrate degradation; glycolysis; pyruvate from D-glyceraldehyde 3-phosphate: step 1/5. In Caenorhabditis briggsae, this protein is Glyceraldehyde-3-phosphate dehydrogenase 2.